A 151-amino-acid polypeptide reads, in one-letter code: Transcriptional regulator MraZ (151 aa).

2 SpoVT-AbrB domains span residues 5–52 (ATAV…PLDE) and 81–124 (ATEC…SDVE).

This sequence belongs to the MraZ family. In terms of assembly, forms oligomers.

The protein resides in the cytoplasm. Its subcellular location is the nucleoid. This chain is Transcriptional regulator MraZ, found in Haemophilus influenzae (strain 86-028NP).